A 144-amino-acid chain; its full sequence is 3-hydroxyacyl-[acyl-carrier-protein] dehydratase FabZ (144 aa).

Histidine 51 is an active-site residue.

It belongs to the thioester dehydratase family. FabZ subfamily.

Its subcellular location is the cytoplasm. It carries out the reaction a (3R)-hydroxyacyl-[ACP] = a (2E)-enoyl-[ACP] + H2O. Functionally, involved in unsaturated fatty acids biosynthesis. Catalyzes the dehydration of short chain beta-hydroxyacyl-ACPs and long chain saturated and unsaturated beta-hydroxyacyl-ACPs. In Enterococcus faecalis (strain ATCC 700802 / V583), this protein is 3-hydroxyacyl-[acyl-carrier-protein] dehydratase FabZ (fabZ1).